Consider the following 65-residue polypeptide: UPF0337 protein BCE_1081 (65 aa).

Residues 1–28 form a disordered region; sequence MSGGLKEQITGKVEKTKGQVKEGIGEVT. Over residues 12–28 the composition is skewed to basic and acidic residues; sequence KVEKTKGQVKEGIGEVT.

This sequence belongs to the UPF0337 (CsbD) family.

This Bacillus cereus (strain ATCC 10987 / NRS 248) protein is UPF0337 protein BCE_1081.